We begin with the raw amino-acid sequence, 334 residues long: MSFTVWSKTEPFKLSAVQESLITLEHDNKRLLLTYREESKTWDIDLNGFQDMDVNEILQLAFLSIFYVFPTLRTEVVLQWANIESQKGTLSLPVEYNELEGNVSIDRMSFWQIPSPWMYTRCSDWPLSYLPNQVIRRPKCPKPGSTLYERFIPSLNETLSFVSLDIEQHLQYFHEWQNKPRVEYFWNESGSWDQHHEYLTTLQNDPHSFGVIGCFNDVPFAYFEVYWVPEDRIAPFAQPWHTHDRGFHALVGNDKFRGPHRVPVWLSSITHMLFLDDPRTQRVLLEPRIDNSKFINYLIEENYSKRLEFNFPHKRAAFMEITRNMFFSCLGPRI.

Residue His-248 coordinates substrate. Glu-286 serves as the catalytic Proton acceptor.

This sequence belongs to the lysine N-acyltransferase mbtK family.

It is found in the cytoplasm. Its subcellular location is the nucleus. The sequence is that of Putative lysine N-acyltransferase C17G9.06c from Schizosaccharomyces pombe (strain 972 / ATCC 24843) (Fission yeast).